The chain runs to 504 residues: Probable cytosol aminopeptidase (504 aa).

Lys274 and Asp279 together coordinate Mn(2+). Lys286 is an active-site residue. Mn(2+) contacts are provided by Asp297, Asp356, and Glu358. Arg360 is a catalytic residue.

The protein belongs to the peptidase M17 family. Requires Mn(2+) as cofactor.

It is found in the cytoplasm. It catalyses the reaction Release of an N-terminal amino acid, Xaa-|-Yaa-, in which Xaa is preferably Leu, but may be other amino acids including Pro although not Arg or Lys, and Yaa may be Pro. Amino acid amides and methyl esters are also readily hydrolyzed, but rates on arylamides are exceedingly low.. It carries out the reaction Release of an N-terminal amino acid, preferentially leucine, but not glutamic or aspartic acids.. Its function is as follows. Presumably involved in the processing and regular turnover of intracellular proteins. Catalyzes the removal of unsubstituted N-terminal amino acids from various peptides. This is Probable cytosol aminopeptidase from Blochmanniella floridana.